The chain runs to 309 residues: Large ribosomal subunit protein uL22m (309 aa).

The transit peptide at 1–25 (MNFHTARISQVGVISRALLSSVSRR) directs the protein to the mitochondrion. Residues 40–63 (SLFGSITENKPKEGKNRGDEDAGS) form a disordered region. Basic and acidic residues predominate over residues 48–59 (NKPKEGKNRGDE).

The protein belongs to the universal ribosomal protein uL22 family. As to quaternary structure, component of the mitochondrial large ribosomal subunit (mt-LSU). Mature yeast 74S mitochondrial ribosomes consist of a small (37S) and a large (54S) subunit. The 37S small subunit contains a 15S ribosomal RNA (15S mt-rRNA) and 34 different proteins. The 54S large subunit contains a 21S rRNA (21S mt-rRNA) and 46 different proteins. uL22m forms the wall of the exit tunnel.

Its subcellular location is the mitochondrion. In terms of biological role, component of the mitochondrial ribosome (mitoribosome), a dedicated translation machinery responsible for the synthesis of mitochondrial genome-encoded proteins, including at least some of the essential transmembrane subunits of the mitochondrial respiratory chain. The mitoribosomes are attached to the mitochondrial inner membrane and translation products are cotranslationally integrated into the membrane. This chain is Large ribosomal subunit protein uL22m (MRPL22), found in Saccharomyces cerevisiae (strain ATCC 204508 / S288c) (Baker's yeast).